A 612-amino-acid polypeptide reads, in one-letter code: ETS-related transcription factor Elf-1 (612 aa).

Phosphoserine is present on residues serine 110, serine 163, serine 167, and serine 168. The span at 156-169 (VQETNADSPGASSP) shows a compositional bias: polar residues. The tract at residues 156–199 (VQETNADSPGASSPEQRKRKKGRKTKPPRPDSPTTTPNISVKKK) is disordered. Over residues 172–182 (RKRKKGRKTKP) the composition is skewed to basic residues. Serine 187 carries the post-translational modification Phosphoserine. Threonine 190 is modified (phosphothreonine). Positions 208–290 (IYLWEFLLAL…EGQRLVYQFK (83 aa)) form a DNA-binding region, ETS. The interval 300–361 (DDEDPSSSIE…AANPKDPVEV (62 aa)) is disordered. Positions 305 to 322 (SSSIESSDQSLSSTTASS) are enriched in low complexity. Positions 323–335 (RNQANRSRVSSSP) are enriched in polar residues. Residue serine 431 is modified to Phosphoserine. Over residues 562 to 577 (EVEKKAEDDLNEDAEK) the composition is skewed to basic and acidic residues. The disordered stretch occupies residues 562 to 586 (EVEKKAEDDLNEDAEKSAQQPQPYV).

Belongs to the ETS family. As to quaternary structure, binds to the underphosphorylated form of RB. May interact with other transcription factors in order to regulate specific genes. Interacts with RUNX1. Interacts with SP1; the interaction is inhibited by glycosylation of SP1. In terms of tissue distribution, predominantly found in hematopoietic cells. Detected in other cell types such as fibroblasts.

It is found in the nucleus. In terms of biological role, transcription factor that activates the LYN and BLK promoters. The polypeptide is ETS-related transcription factor Elf-1 (Elf1) (Mus musculus (Mouse)).